The following is a 39-amino-acid chain: Potassium channel toxin alpha-KTx 31.1 (39 aa).

3 disulfide bridges follow: C7-C30, C13-C35, and C17-C37.

Belongs to the short scorpion toxin superfamily. Potassium channel inhibitor family. Alpha-KTx 31 subfamily. Expressed by the venom gland.

Its subcellular location is the secreted. In terms of biological role, voltage-gated potassium channel inhibitor. 1 uM of the native toxin inhibits rat Kv1.2/KCNA2 (100% inhibition), and drosophila Shaker IR/Sh (100%), human Kv1.3/KCNA3 (83%), rat Kv1.1/KCNA1 (32%) and rat Kv1.6/KCNA6 (21%). In Buthus occitanus tunetanus (Common European scorpion), this protein is Potassium channel toxin alpha-KTx 31.1.